The following is a 152-amino-acid chain: 3-hydroxyacyl-[acyl-carrier-protein] dehydratase FabZ (152 aa).

Residue His54 is part of the active site.

It belongs to the thioester dehydratase family. FabZ subfamily.

The protein localises to the cytoplasm. It catalyses the reaction a (3R)-hydroxyacyl-[ACP] = a (2E)-enoyl-[ACP] + H2O. In terms of biological role, involved in unsaturated fatty acids biosynthesis. Catalyzes the dehydration of short chain beta-hydroxyacyl-ACPs and long chain saturated and unsaturated beta-hydroxyacyl-ACPs. The chain is 3-hydroxyacyl-[acyl-carrier-protein] dehydratase FabZ from Shewanella woodyi (strain ATCC 51908 / MS32).